We begin with the raw amino-acid sequence, 781 residues long: MMEEGRKEEPEERGEKSTMRDLLQRAVDKGHLTAREALDRWTLEDHGEIHPWIILFCFAGAIGVIGGWGLRGELNVCMLIVLVVLVPIYWGIGEAARNIDSLDWKWIRKVFIVIIFVLVGLLGGCSAQRQHVAMLLSPPGIRLPSTVDIPWFCISNAPIPDCVHWTVQKPDQKHQQIENVMELQEVLDNATFFEVPDLFDRVYLELARLDANSTGVPVNIPPTGISQVKGDCSTGDIQGMNETLSTRGTLGERTFLSIRPGGWFTNTTVWFCVHWPFGFIQRKENLSEGSAQVRNCLDPINVTEPRVANYSYCPLEYKGKNYINKGLKCVGGRVDLSSNPEQHTDLLACGTFCQNFRNCDMVSRDILIGYHPSQQKQHIYINHTFWEQANTQWILVQVPNYGFVPVPDTERPWKGGKPRGKRAVGMVIFLLVLAIMAMTASVTAAATLVKQHATAQVVGRLSTNLTYITKIQNQYLHLFQNLNTRVNNLHHRVTYLEFLAEVHEVQTGLGCVPRGRYCHFDWRPEEVGLNMTLWNSTTWQQWMSYYDQIEENIWNLKYNWSEALEKGKSNTDGLEPDVFRYLADLSSSFTWGSWVDKLVWLAYILLAYFAFKVLQCIMSNLGAQTRYQLLNAQEDTDPAGDGDQPDDHRSGDTPRSGVPSGGWSQKLSEGKKIGCLILRTEWQNWRNDLRTLRWLTLGGKILQLPLSLLVLLVRILLHILSPTFQNQRGWTVGRKGTGGDDRELSPELEYLSWTGSSQEMVEMRDLKEEDIPEEGIRPVEM.

At 1–597 the chain is on the extracellular side; sequence MMEEGRKEEP…SFTWGSWVDK (597 aa). N-linked (GlcNAc...) asparagine; by host glycosylation is found at Asn-189, Asn-212, Asn-241, Asn-266, Asn-285, Asn-301, Asn-309, and Asn-382. The fusion peptide stretch occupies residues 423 to 443; sequence AVGMVIFLLVLAIMAMTASVT. N-linked (GlcNAc...) asparagine; by host glycosylation occurs at Asn-464. The segment at 482–498 is immunosuppression; sequence LNTRVNNLHHRVTYLEF. N-linked (GlcNAc...) asparagine; by host glycans are attached at residues Asn-530, Asn-535, and Asn-559. A helical membrane pass occupies residues 598–618; it reads LVWLAYILLAYFAFKVLQCIM. Residues 619–781 lie on the Cytoplasmic side of the membrane; it reads SNLGAQTRYQ…PEEGIRPVEM (163 aa). Residues 634–644 are compositionally biased toward acidic residues; that stretch reads EDTDPAGDGDQ. The disordered stretch occupies residues 634–666; sequence EDTDPAGDGDQPDDHRSGDTPRSGVPSGGWSQK.

As to quaternary structure, the mature envelope protein (Env) consists of a trimer of SU-TM heterodimers attached by non-covalent interactions or by a labile interchain disulfide bond. Post-translationally, specific enzymatic cleavages in vivo yield mature proteins. Envelope glycoproteins are synthesized as an inactive precursor that is N-glycosylated and processed likely by host cell furin or by a furin-like protease in the Golgi to yield the mature SU and TM proteins. The cleavage site between SU and TM requires the minimal sequence [KR]-X-[KR]-R.

Its subcellular location is the virion membrane. It is found in the host cell membrane. The surface protein (SU) attaches the virus to the host cell by binding to its receptor. This interaction triggers the refolding of the transmembrane protein (TM) and is thought to activate its fusogenic potential by unmasking its fusion peptide. Fusion occurs at the host cell plasma membrane. Its function is as follows. The transmembrane protein (TM) acts as a class I viral fusion protein. Under the current model, the protein has at least 3 conformational states: pre-fusion native state, pre-hairpin intermediate state, and post-fusion hairpin state. During viral and target cell membrane fusion, the coiled coil regions (heptad repeats) assume a trimer-of-hairpins structure, positioning the fusion peptide in close proximity to the C-terminal region of the ectodomain. The formation of this structure appears to drive apposition and subsequent fusion of viral and target cell membranes. Membranes fusion leads to delivery of the nucleocapsid into the cytoplasm. The sequence is that of Envelope glycoprotein (env) from Bos javanicus (Wild banteng).